The following is a 56-amino-acid chain: Alpha-conotoxin EpI (56 aa).

Positions 1-16 are cleaved as a signal peptide; the sequence is MFTVFLLVVLATTVVS. Positions 17-39 are excised as a propeptide; it reads FTSDRASDSRKDAASGLIALTIK. Cystine bridges form between C41/C47 and C42/C55. A ser-Xaa-Pro motif, crucial for potent interaction with nAChR region spans residues 43–45; it reads SDP. Position 54 is a sulfotyrosine (Y54). Position 55 is a cysteine amide (C55).

Belongs to the conotoxin A superfamily. Post-translationally, both tyrosine sulfation and C-terminal amidation are important for activity and structure stability. As to expression, expressed by the venom duct.

The protein resides in the secreted. Functionally, alpha-conotoxins act on postsynaptic membranes, they bind to the nicotinic acetylcholine receptors (nAChR) and thus inhibit them. This native peptide blocks mammalian nicotinic acetylcholine receptors composed of alpha-3-beta-2/CHRNA3-CHRNB2 and alpha-3-beta-4/CHRNA3-CHRNB4 subunits. In Conus episcopatus (Bishop's cone), this protein is Alpha-conotoxin EpI.